A 525-amino-acid polypeptide reads, in one-letter code: Retinoblastoma-binding-like protein E (525 aa).

WD repeat units lie at residues proline 25–threonine 66, histidine 69–serine 108, serine 222–glutamine 261, aspartate 267–glutamate 312, and glycine 313–serine 352. Disordered stretches follow at residues aspartate 371–tyrosine 398 and glutamate 462–lysine 525. Residues glutamine 383 to asparagine 392 are compositionally biased toward low complexity. Positions glutamate 462–serine 471 are enriched in basic and acidic residues. The span at serine 472–serine 500 shows a compositional bias: low complexity. The segment covering glutamine 501–lysine 525 has biased composition (basic and acidic residues).

The protein resides in the nucleus. Functionally, involved in mono-, di- and trimethylation at 'Lys-4' of histone H3. Histone H3 'Lys-4' methylation represents a specific tag for epigenetic transcriptional activation. In Dictyostelium discoideum (Social amoeba), this protein is Retinoblastoma-binding-like protein E.